A 312-amino-acid chain; its full sequence is Methionyl-tRNA formyltransferase (312 aa).

Residue 109-112 (SILP) participates in (6S)-5,6,7,8-tetrahydrofolate binding.

This sequence belongs to the Fmt family.

The catalysed reaction is L-methionyl-tRNA(fMet) + (6R)-10-formyltetrahydrofolate = N-formyl-L-methionyl-tRNA(fMet) + (6S)-5,6,7,8-tetrahydrofolate + H(+). In terms of biological role, attaches a formyl group to the free amino group of methionyl-tRNA(fMet). The formyl group appears to play a dual role in the initiator identity of N-formylmethionyl-tRNA by promoting its recognition by IF2 and preventing the misappropriation of this tRNA by the elongation apparatus. The protein is Methionyl-tRNA formyltransferase of Dictyoglomus thermophilum (strain ATCC 35947 / DSM 3960 / H-6-12).